Reading from the N-terminus, the 148-residue chain is uncharacterized protein (148 aa).

Belongs to the IIV-6 395R family.

This is an uncharacterized protein from Aedes vexans (Inland floodwater mosquito).